The chain runs to 204 residues: Inner membrane-spanning protein YciB (204 aa).

The next 5 helical transmembrane spans lie at 48–68 (ILFA…LYFF), 73–93 (FESM…ATLM), 102–122 (WKPT…QLFT), 147–167 (GAWI…AYAF), and 170–190 (AVWV…FVVG).

The protein belongs to the YciB family.

It is found in the cell inner membrane. Its function is as follows. Plays a role in cell envelope biogenesis, maintenance of cell envelope integrity and membrane homeostasis. In Nitrosococcus oceani (strain ATCC 19707 / BCRC 17464 / JCM 30415 / NCIMB 11848 / C-107), this protein is Inner membrane-spanning protein YciB.